The following is a 190-amino-acid chain: MKQIVANQKVKIPEGLTVHVKSRLVTVKGPRGVLKRNFKHLAVDIRMVNPRVLKVEKWFGSKKELAAVRTVCSHVENMIKGVTKGFQYKMRSVYAHFPINCVTTEGNSVIEIRNFLGEKYIRRVKMAPGVTVVNSPKQKDELIIEGNSLEDVSSSAALIQQSTTVKNKDIRKFLDGLYVSEKTTVEVDEI.

Belongs to the universal ribosomal protein uL6 family.

This is Large ribosomal subunit protein uL6 (RpL9) from Spodoptera frugiperda (Fall armyworm).